A 537-amino-acid chain; its full sequence is Tyrosine-protein kinase Fyn (537 aa).

A lipid anchor (N-myristoyl glycine) is attached at Gly-2. 2 S-palmitoyl cysteine lipidation sites follow: Cys-3 and Cys-6. The residue at position 12 (Thr-12) is a Phosphothreonine; by PKC. Phosphoserine is present on residues Ser-21 and Ser-26. Residues 82 to 143 (TGVTLFVALY…PSNYVAPVDS (62 aa)) enclose the SH3 domain. One can recognise an SH2 domain in the interval 149 to 246 (WYFGKLGRKD…GLCCRLVVPC (98 aa)). Tyr-185 carries the phosphotyrosine modification. A Protein kinase domain is found at 271–524 (LQLIKRLGNG…YLQGFLEDYF (254 aa)). Residues 277 to 285 (LGNGQFGEV) and Lys-299 contribute to the ATP site. Asp-390 serves as the catalytic Proton acceptor. Tyr-420 is modified (phosphotyrosine; by autocatalysis). Tyr-531 carries the phosphotyrosine; by CSK modification.

It belongs to the protein kinase superfamily. Tyr protein kinase family. SRC subfamily. Interacts (via its SH3 domain) with PIK3R1 and PRMT8. Interacts with FYB1, PAG1, and SH2D1A. Interacts with CD79A (tyrosine-phosphorylated form); the interaction increases FYN activity. Interacts (via SH2 domain) with CSF1R (tyrosine phosphorylated). Interacts with TOM1L1 (phosphorylated form). Interacts with KDR (tyrosine phosphorylated). Interacts (via SH3 domain) with KLHL2 (via N-terminus). Interacts with SH2D1A and SLAMF1. Interacts with ITCH; the interaction phosphorylates ITCH and negatively regulates its activity. Interacts with FASLG. Interacts with RUNX3. Interacts with KIT. Interacts with EPHA8; possible downstream effector of EPHA8 in regulation of cell adhesion. Interacts with PTK2/FAK1; this interaction leads to PTK2/FAK1 phosphorylation and activation. Interacts with CAV1; this interaction couples integrins to the Ras-ERK pathway. Interacts with UNC119. Interacts (via SH2 domain) with PTPRH (phosphorylated form). Interacts with PTPRO (phosphorylated form). Interacts with PTPRB (phosphorylated form). Interacts with FYB2. Interacts with DSCAM. Interacts with SKAP1 and FYB1; this interaction promotes the phosphorylation of CLNK. Interacts with NEDD9; in the presence of PTK2. It depends on Mn(2+) as a cofactor. Post-translationally, autophosphorylated at Tyr-420. Phosphorylation on the C-terminal tail at Tyr-531 by CSK maintains the enzyme in an inactive state. PTPRC/CD45 dephosphorylates Tyr-531 leading to activation. Ultraviolet B (UVB) strongly increase phosphorylation at Thr-12 and kinase activity, and promotes translocation from the cytoplasm to the nucleus. Dephosphorylation at Tyr-420 by PTPN2 negatively regulates T-cell receptor signaling. Phosphorylated at tyrosine residues, which can be enhanced by NTN1. In terms of processing, palmitoylated. Palmitoylation at Cys-3 and Cys-6, probably by ZDHHC21, regulates subcellular location.

The protein resides in the cytoplasm. Its subcellular location is the nucleus. The protein localises to the cell membrane. It localises to the perikaryon. The enzyme catalyses L-tyrosyl-[protein] + ATP = O-phospho-L-tyrosyl-[protein] + ADP + H(+). Inhibited by phosphorylation of Tyr-531 by leukocyte common antigen and activated by dephosphorylation of this site. Functionally, non-receptor tyrosine-protein kinase that plays a role in many biological processes including regulation of cell growth and survival, cell adhesion, integrin-mediated signaling, cytoskeletal remodeling, cell motility, immune response and axon guidance. Inactive FYN is phosphorylated on its C-terminal tail within the catalytic domain. Following activation by PKA, the protein subsequently associates with PTK2/FAK1, allowing PTK2/FAK1 phosphorylation, activation and targeting to focal adhesions. Involved in the regulation of cell adhesion and motility through phosphorylation of CTNNB1 (beta-catenin) and CTNND1 (delta-catenin). Regulates cytoskeletal remodeling by phosphorylating several proteins including the actin regulator WAS and the microtubule-associated proteins MAP2 and MAPT. Promotes cell survival by phosphorylating AGAP2/PIKE-A and preventing its apoptotic cleavage. Participates in signal transduction pathways that regulate the integrity of the glomerular slit diaphragm (an essential part of the glomerular filter of the kidney) by phosphorylating several slit diaphragm components including NPHS1, KIRREL1 and TRPC6. Plays a role in neural processes by phosphorylating DPYSL2, a multifunctional adapter protein within the central nervous system, ARHGAP32, a regulator for Rho family GTPases implicated in various neural functions, and SNCA, a small pre-synaptic protein. Involved in reelin signaling by mediating phosphorylation of DAB1 following reelin (RELN)-binding to its receptor. Participates in the downstream signaling pathways that lead to T-cell differentiation and proliferation following T-cell receptor (TCR) stimulation. Phosphorylates PTK2B/PYK2 in response to T-cell receptor activation. Also participates in negative feedback regulation of TCR signaling through phosphorylation of PAG1, thereby promoting interaction between PAG1 and CSK and recruitment of CSK to lipid rafts. CSK maintains LCK and FYN in an inactive form. Promotes CD28-induced phosphorylation of VAV1. In mast cells, phosphorylates CLNK after activation of immunoglobulin epsilon receptor signaling. Can also promote CD244-mediated NK cell activation. The polypeptide is Tyrosine-protein kinase Fyn (Sus scrofa (Pig)).